We begin with the raw amino-acid sequence, 308 residues long: UPF0026 protein jhp_0109 (308 aa).

Residues 18-247 (FGKSLGVDLS…VSLPKRSTAQ (230 aa)) enclose the Radical SAM core domain. 3 residues coordinate [4Fe-4S] cluster: C33, C37, and C40.

It belongs to the UPF0026 family. [4Fe-4S] cluster serves as cofactor.

The chain is UPF0026 protein jhp_0109 from Helicobacter pylori (strain J99 / ATCC 700824) (Campylobacter pylori J99).